Here is a 157-residue protein sequence, read N- to C-terminus: Transcription elongation factor GreA (157 aa).

Residues 47-75 adopt a coiled-coil conformation; the sequence is ENAEYDAAREKQGQIEDRITELENILSNA.

Belongs to the GreA/GreB family.

Functionally, necessary for efficient RNA polymerase transcription elongation past template-encoded arresting sites. The arresting sites in DNA have the property of trapping a certain fraction of elongating RNA polymerases that pass through, resulting in locked ternary complexes. Cleavage of the nascent transcript by cleavage factors such as GreA or GreB allows the resumption of elongation from the new 3'terminus. GreA releases sequences of 2 to 3 nucleotides. The sequence is that of Transcription elongation factor GreA from Mycoplasmopsis pulmonis (strain UAB CTIP) (Mycoplasma pulmonis).